Here is a 174-residue protein sequence, read N- to C-terminus: Probable N-acetyltransferase Rv2775 (174 aa).

Positions 6–172 (IRIRAAKPID…VGYRLYRSAP (167 aa)) constitute an N-acetyltransferase domain.

Belongs to the acetyltransferase family.

The protein is Probable N-acetyltransferase Rv2775 of Mycobacterium tuberculosis (strain ATCC 25618 / H37Rv).